A 358-amino-acid chain; its full sequence is Src kinase-associated phosphoprotein 2 (358 aa).

2 positions are modified to phosphoserine: S5 and S6. Residues 62–88 (ESQDKGDAEDGEEYDDPFAGPPDTISL) form a disordered region. Phosphotyrosine is present on Y75. Phosphoserine is present on residues S87 and S90. The 104-residue stretch at 116–219 (FVLKAGYLEK…WVQQLNFVLQ (104 aa)) folds into the PH domain. Phosphotyrosine is present on residues Y151 and Y197. The residue at position 223 (S223) is a Phosphoserine. The segment at 232–254 (ERGELYDDVDHPLPSSSPTRSLP) is disordered. Residues 243 to 253 (PLPSSSPTRSL) show a composition bias toward low complexity. Y260 bears the Phosphotyrosine mark. Phosphoserine occurs at positions 282 and 285. One can recognise an SH3 domain in the interval 296-357 (NYANFYQGLW…PKAYVMEMYD (62 aa)).

The protein belongs to the SKAP family. Interacts with FYB1, which is required for SKAP2 protein stability. Interacts with PTPNS1. Part of a complex consisting of SKAP2, FYB1 and PTPNS1. Part of a complex consisting of SKAP2, FYB1 and LILRB3. Interacts with LAT, GRB2, PTK2B and PRAM1. May interact with actin. May interact with FYN, HCK and LYN. Interacts with FASLG.

It is found in the cytoplasm. Functionally, may be involved in B-cell and macrophage adhesion processes. In B-cells, may act by coupling the B-cell receptor (BCR) to integrin activation. May play a role in src signaling pathway. This Bos taurus (Bovine) protein is Src kinase-associated phosphoprotein 2 (SKAP2).